A 492-amino-acid chain; its full sequence is Catalase isozyme 3 (492 aa).

Active-site residues include His65 and Asn138. Tyr347 serves as a coordination point for heme.

The protein belongs to the catalase family. Homotetramer. It depends on heme as a cofactor. Abundant in green cotyledons, etiolated cotyledons, green hypocotyl and root, but not in young leaf.

It is found in the peroxisome. The enzyme catalyses 2 H2O2 = O2 + 2 H2O. Its function is as follows. Occurs in almost all aerobically respiring organisms and serves to protect cells from the toxic effects of hydrogen peroxide. This is Catalase isozyme 3 (CAT3) from Cucurbita pepo (Vegetable marrow).